The sequence spans 390 residues: Heat stress transcription factor B-2b (390 aa).

A disordered region spans residues 165–212 (TRDGSPVLSGEEQVISSSSSPEPPLVLPQAPSGSGSGGVASGDVGDEN). A coiled-coil region spans residues 206-237 (GDVGDENERLRRENAQLARELSQMRKLCNNIL). Positions 215–244 (LRRENAQLARELSQMRKLCNNILLLMSKYA) are hydrophobic repeat HR-A/B. The short motif at 318-322 (RKRMR) is the Nuclear localization signal element. The segment at 322-363 (RHDGGGDDDHAATVKAEPMDGRPHGKDEQSAETQAWPIYRPR) is disordered. Positions 323 to 350 (HDGGGDDDHAATVKAEPMDGRPHGKDEQ) are enriched in basic and acidic residues.

This sequence belongs to the HSF family. Class B subfamily. Homotrimer. Exhibits temperature-dependent phosphorylation.

It is found in the nucleus. Functionally, transcriptional regulator that specifically binds DNA of heat shock promoter elements (HSE). The protein is Heat stress transcription factor B-2b (HSFB2B) of Oryza sativa subsp. japonica (Rice).